The chain runs to 418 residues: MSPDKREFDIVLYGATGFSGKLTAEHLALSESTARIALAGRSSERLRNVRALLGPNAQDWPLIVADASQPSTLEAMAGRAQVVLTTVGPYTRYGLPLVAACARTGTDYADLTGELMFCRNSIDLHHKQAAATGARIILACGFDSVPSDLNVYQLYRRVIEDRTGELCDTDLVLRSFSQRWVSGGSVAAYSEAMLTTSNDPEALRLVTDPYTLTTDRDAEPDLGPQPDFPRHRGSDLAPELAGFWTGGFVQAQFNTRIVRRSNALQNWSYGRQFRYSETMSLGKSWAAPVASAAVTSVVAGAVGLGNKYFNRLPRRVVERVTPKSGTGPSRKTQARGHYTFETYTTTTTGARYMATFAHNVDAYKSTAGLLAASGLTLALDRDRLSELRGVLTPAAAMGEALLTRLPSAGVVIGTTRLS.

This sequence belongs to the saccharopine dehydrogenase family. Enoyl reductase subfamily.

Its function is as follows. Involved in the reduction of the double bond between C-4 and C-5 during phthiocerol dimycocerosates (DIM A) and glycosylated phenolphthiocerol dimycocerosates (PGL) biosynthesis. The protein is Trans-acting enoyl reductase of Mycobacterium leprae (strain TN).